Reading from the N-terminus, the 703-residue chain is Elongation factor G 2 (703 aa).

The region spanning 8-291 is the tr-type G domain; it reads ELYRNIGIVA…AVIDYLPAPS (284 aa). GTP contacts are provided by residues 17-24, 89-93, and 143-146; these read AHVDAGKT, DTPGH, and NKMD.

This sequence belongs to the TRAFAC class translation factor GTPase superfamily. Classic translation factor GTPase family. EF-G/EF-2 subfamily.

The protein resides in the cytoplasm. Catalyzes the GTP-dependent ribosomal translocation step during translation elongation. During this step, the ribosome changes from the pre-translocational (PRE) to the post-translocational (POST) state as the newly formed A-site-bound peptidyl-tRNA and P-site-bound deacylated tRNA move to the P and E sites, respectively. Catalyzes the coordinated movement of the two tRNA molecules, the mRNA and conformational changes in the ribosome. The sequence is that of Elongation factor G 2 (fusB) from Pseudomonas putida (strain ATCC 47054 / DSM 6125 / CFBP 8728 / NCIMB 11950 / KT2440).